Reading from the N-terminus, the 299-residue chain is Ribosomal RNA small subunit methyltransferase H (299 aa).

Residues 36–38 (GGH), Asp-55, Asp-103, and Gln-110 each bind S-adenosyl-L-methionine. Composition is skewed to basic and acidic residues over residues 268–282 (KPVR…ENPR) and 289–299 (RAAERIEKGGD). Positions 268–299 (KPVRPSEEEIRENPRARSGRLRAAERIEKGGD) are disordered.

This sequence belongs to the methyltransferase superfamily. RsmH family.

The protein resides in the cytoplasm. It carries out the reaction cytidine(1402) in 16S rRNA + S-adenosyl-L-methionine = N(4)-methylcytidine(1402) in 16S rRNA + S-adenosyl-L-homocysteine + H(+). Functionally, specifically methylates the N4 position of cytidine in position 1402 (C1402) of 16S rRNA. In Thermotoga petrophila (strain ATCC BAA-488 / DSM 13995 / JCM 10881 / RKU-1), this protein is Ribosomal RNA small subunit methyltransferase H.